Consider the following 141-residue polypeptide: Small ribosomal subunit protein uS12 (141 aa).

Residue D89 is modified to 3-methylthioaspartic acid. The segment at 104 to 141 (ASGAVGPSNTNKLNRNVSRSKYGVKRPKAGAKPASKAK) is disordered. The segment covering 110 to 122 (PSNTNKLNRNVSR) has biased composition (polar residues). Residues 125 to 141 (YGVKRPKAGAKPASKAK) show a composition bias toward basic residues.

It belongs to the universal ribosomal protein uS12 family. In terms of assembly, part of the 30S ribosomal subunit. Contacts proteins S8 and S17. May interact with IF1 in the 30S initiation complex.

Its function is as follows. With S4 and S5 plays an important role in translational accuracy. In terms of biological role, interacts with and stabilizes bases of the 16S rRNA that are involved in tRNA selection in the A site and with the mRNA backbone. Located at the interface of the 30S and 50S subunits, it traverses the body of the 30S subunit contacting proteins on the other side and probably holding the rRNA structure together. The combined cluster of proteins S8, S12 and S17 appears to hold together the shoulder and platform of the 30S subunit. The protein is Small ribosomal subunit protein uS12 of Methylacidiphilum infernorum (isolate V4) (Methylokorus infernorum (strain V4)).